The primary structure comprises 270 residues: Urease accessory protein UreD (270 aa).

The protein belongs to the UreD family. UreD, UreF and UreG form a complex that acts as a GTP-hydrolysis-dependent molecular chaperone, activating the urease apoprotein by helping to assemble the nickel containing metallocenter of UreC. The complex may form in the order UreABCD, UreABCDF, UreABCDFG. The UreE protein probably delivers the nickel in a GTPase-dependent fashion.

The protein localises to the cytoplasm. Its function is as follows. Necessary for the functional incorporation of the urease nickel metallocenter. The protein is Urease accessory protein UreD of Klebsiella aerogenes (Enterobacter aerogenes).